A 359-amino-acid polypeptide reads, in one-letter code: Decorin (359 aa).

A signal peptide spans 1 to 16; that stretch reads MKATIILLLLAQVSWA. A propeptide spanning residues 17-30 is cleaved from the precursor; it reads GPFQQRGLFDFMLE. S34 carries an O-linked (Xyl...) (glycosaminoglycan) serine glycan. Disulfide bonds link C54/C60 and C58/C67. LRR repeat units follow at residues 73 to 93, 94 to 117, 118 to 141, 142 to 162, 163 to 186, 187 to 212, 213 to 233, 234 to 257, 258 to 281, 282 to 304, 305 to 334, and 335 to 359; these read DKVP…NNKI, TEIK…NNKI, SKVS…KNQL, KELP…ENEI, TKVR…TNPL, KSSG…DTNI, TSIP…GNKI, SRVD…FNSI, SAVD…NNKL, TRVP…NNNI, SVVG…SNPV, and QYWE…GNYK. N211 carries N-linked (GlcNAc...) asparagine glycosylation. Residues N262 and N303 are each glycosylated (N-linked (GlcNAc...) asparagine). C313 and C346 form a disulfide bridge.

Belongs to the small leucine-rich proteoglycan (SLRP) family. SLRP class I subfamily. As to quaternary structure, binds to type I and type II collagen, fibronectin and TGF-beta. Forms a ternary complex with MFAP2 and ELN. Interacts with DPT. In terms of processing, the attached glycosaminoglycan chain can be either chondroitin sulfate or dermatan sulfate depending upon the tissue of origin. Detected in placenta (at protein level). Detected in cerebrospinal fluid, fibroblasts and urine (at protein level).

It is found in the secreted. Its subcellular location is the extracellular space. The protein resides in the extracellular matrix. In terms of biological role, may affect the rate of fibrils formation. This chain is Decorin (DCN), found in Homo sapiens (Human).